A 125-amino-acid chain; its full sequence is Splicing factor 3B subunit 6 (125 aa).

Residues 16–29 (EVNRILYIRNLPYK) are interaction with pre-mRNA branch site. In terms of domain architecture, RRM spans 19–94 (RILYIRNLPY…RYLVVLYYNA (76 aa)). Lys-29 carries the post-translational modification N6-acetyllysine; alternate. Lys-29 is covalently cross-linked (Glycyl lysine isopeptide (Lys-Gly) (interchain with G-Cter in SUMO2); alternate). Residue Lys-41 is modified to N6-acetyllysine.

In terms of assembly, component of the 17S U2 SnRNP complex, a ribonucleoprotein complex that contains small nuclear RNA (snRNA) U2 and a number of specific proteins. Part of the SF3B subcomplex of the 17S U2 SnRNP complex. SF3B associates with the splicing subcomplex SF3A and a 12S RNA unit to form the U2 small nuclear ribonucleoproteins complex (U2 snRNP). Within the SF3B complex interacts directly with SF3B1. Component of the minor spliceosome, which splices U12-type introns.

The protein localises to the nucleus. Its function is as follows. Component of the 17S U2 SnRNP complex of the spliceosome, a large ribonucleoprotein complex that removes introns from transcribed pre-mRNAs. The 17S U2 SnRNP complex (1) directly participates in early spliceosome assembly and (2) mediates recognition of the intron branch site during pre-mRNA splicing by promoting the selection of the pre-mRNA branch-site adenosine, the nucleophile for the first step of splicing. Within the 17S U2 SnRNP complex, SF3B6 is part of the SF3B subcomplex, which is required for 'A' complex assembly formed by the stable binding of U2 snRNP to the branchpoint sequence in pre-mRNA. Sequence independent binding of SF3A and SF3B subcomplexes upstream of the branch site is essential, it may anchor U2 snRNP to the pre-mRNA. Within the 17S U2 SnRNP complex, SF3B6 directly contacts the pre-mRNA branch site adenosine for the first catalytic step of splicing. SF3B6 stabilizes the intron branch site-U2 snRNA duplex, thereby promoting-binding of introns with poor sequence complementarity. Also acts as a component of the minor spliceosome, which is involved in the splicing of U12-type introns in pre-mRNAs. In Mus musculus (Mouse), this protein is Splicing factor 3B subunit 6 (Sf3b6).